A 354-amino-acid polypeptide reads, in one-letter code: Uroporphyrinogen decarboxylase (354 aa).

Substrate-binding positions include 27 to 31 (RQAGR), Asp-77, Tyr-154, Thr-209, and His-327.

This sequence belongs to the uroporphyrinogen decarboxylase family. As to quaternary structure, homodimer.

It localises to the cytoplasm. The catalysed reaction is uroporphyrinogen III + 4 H(+) = coproporphyrinogen III + 4 CO2. It participates in porphyrin-containing compound metabolism; protoporphyrin-IX biosynthesis; coproporphyrinogen-III from 5-aminolevulinate: step 4/4. Functionally, catalyzes the decarboxylation of four acetate groups of uroporphyrinogen-III to yield coproporphyrinogen-III. The protein is Uroporphyrinogen decarboxylase of Pectobacterium carotovorum subsp. carotovorum (strain PC1).